A 365-amino-acid polypeptide reads, in one-letter code: Putative glutamate--cysteine ligase 2-2 (365 aa).

It belongs to the glutamate--cysteine ligase type 2 family. YbdK subfamily.

It catalyses the reaction L-cysteine + L-glutamate + ATP = gamma-L-glutamyl-L-cysteine + ADP + phosphate + H(+). In terms of biological role, ATP-dependent carboxylate-amine ligase which exhibits weak glutamate--cysteine ligase activity. The polypeptide is Putative glutamate--cysteine ligase 2-2 (Mycolicibacterium vanbaalenii (strain DSM 7251 / JCM 13017 / BCRC 16820 / KCTC 9966 / NRRL B-24157 / PYR-1) (Mycobacterium vanbaalenii)).